The chain runs to 134 residues: UPF0412 protein YaaI (134 aa).

Residues 1-23 (MKSVFTLSASLAISLLLCCTAQA) form the signal peptide.

The protein belongs to the UPF0412 family.

The protein is UPF0412 protein YaaI of Escherichia coli (strain SMS-3-5 / SECEC).